We begin with the raw amino-acid sequence, 201 residues long: Receptor expression-enhancing protein 1 (201 aa).

The next 2 membrane-spanning stretches (helical) occupy residues 1–21 and 35–55; these read MVSW…YPAY and YVKW…ETFT. Serine 152 is modified (phosphoserine). Residues 158 to 201 form a disordered region; that stretch reads TIRGDGAPAPSGPPPPGTGRSSGKHSQPKMSRSASESAGSSGTA. The segment covering 188-201 has biased composition (low complexity); the sequence is SRSASESAGSSGTA.

It belongs to the DP1 family. Interacts with OLFR992. Interacts with SPAST and ATL1. Interacts (via C-terminus) with microtubules. Interacts with ZFYVE27. As to expression, detected in olfactory sensory neurons of the olfactory epithelium, and in total brain.

The protein localises to the membrane. Its subcellular location is the mitochondrion membrane. It is found in the endoplasmic reticulum. Required for endoplasmic reticulum (ER) network formation, shaping and remodeling; it links ER tubules to the cytoskeleton. May also enhance the cell surface expression of odorant receptors. The sequence is that of Receptor expression-enhancing protein 1 (Reep1) from Mus musculus (Mouse).